The sequence spans 122 residues: UPF0102 protein CLL_A1253 (122 aa).

The protein belongs to the UPF0102 family.

This is UPF0102 protein CLL_A1253 from Clostridium botulinum (strain Eklund 17B / Type B).